Here is a 500-residue protein sequence, read N- to C-terminus: Cytochrome P450 monooxygenase acrD (500 aa).

Residues 13 to 32 (PYLSGTNLVWTLLLVGYIIP) form a helical membrane-spanning segment. Asparagine 210 and asparagine 414 each carry an N-linked (GlcNAc...) asparagine glycan. Cysteine 447 provides a ligand contact to heme.

The protein belongs to the cytochrome P450 family. Requires heme as cofactor.

Its subcellular location is the membrane. The protein operates within secondary metabolite biosynthesis. Cytochrome P450 monooxygenase; part of the cluster that mediates the biosynthesis of acurin A, a highly reduced polyketide coupled to a serine via a peptide bond. The activities of the highly reducing polyketide synthase acrA and the nonribosomal peptide synthetase acrB are collectively responsible for the synthesis of the acurin A core structure with a heptaketide backbone produced by acrA covalently fused to a L-serine by acrB. After the formation of the PK-NRP hybrid product, it is detached from acrB by reductive release to set up the formation of the lactam ring by aldol condensation. The hydrolyase acrC then catalyzes water loss to generate a double bond in the ring. This double bond is probably reduced, which is followed by three oxidations at C-22 to generate the carboxylic acid moiety, involving probably the FAD-binding monooxygenase acrE and the cytochrome P450 monooxygenases acrD and acrF. Finally, a last methylation step performed by the O-methyltransferase acrG leads to the production of acurin A. This is Cytochrome P450 monooxygenase acrD from Aspergillus aculeatus (strain ATCC 16872 / CBS 172.66 / WB 5094).